The primary structure comprises 332 residues: MKTLGEFIVEKQHEFSHATGELTALLSAIKLGAKIIHRDINKAGLVDILGASGAENVQGEVQQKLDLFANEKLKAALKARDIVAGIASEEEDEIVVFEGCEHAKYVVLMDPLDGSSNIDVNVSVGTIFSIYRRVTPVGTPVTEEDFLQPGNKQVAAGYVVYGSSTMLVYTTGCGVHAFTYDPSLGVFCLCQERMRFPEKGNTYSINEGNYIKFPNGVKKYIKFCQEEDKSTNRPYTSRYIGSLVADFHRNLLKGGIYLYPSTASHPEGKLRLLYECNPMAFLAEQAGGKASDGKERILDITPESLHQRRPFFVGTDHMVEDVERFIREFPDA.

Residues Glu-89, Asp-110, Leu-112, and Asp-113 each contribute to the Mg(2+) site. Residues 113 to 116, Asn-206, Tyr-239, 257 to 259, and Lys-269 each bind substrate; these read DGSS and YLY. Glu-275 is a Mg(2+) binding site.

Belongs to the FBPase class 1 family. In terms of assembly, homotetramer. The cofactor is Mg(2+).

Its subcellular location is the cytoplasm. It carries out the reaction beta-D-fructose 1,6-bisphosphate + H2O = beta-D-fructose 6-phosphate + phosphate. Its pathway is carbohydrate biosynthesis; gluconeogenesis. This is Fructose-1,6-bisphosphatase class 1 from Citrobacter koseri (strain ATCC BAA-895 / CDC 4225-83 / SGSC4696).